A 109-amino-acid polypeptide reads, in one-letter code: UPF0449 protein C19orf25 homolog (109 aa).

At tyrosine 63 the chain carries Phosphotyrosine.

Belongs to the UPF0449 family.

In Rattus norvegicus (Rat), this protein is UPF0449 protein C19orf25 homolog.